A 161-amino-acid chain; its full sequence is Nucleotide-binding protein Rmet_2899 (161 aa).

This sequence belongs to the YajQ family.

Nucleotide-binding protein. This chain is Nucleotide-binding protein Rmet_2899, found in Cupriavidus metallidurans (strain ATCC 43123 / DSM 2839 / NBRC 102507 / CH34) (Ralstonia metallidurans).